An 88-amino-acid chain; its full sequence is Putative membrane protein insertion efficiency factor (88 aa).

The segment at 68–88 (VPPPNSDTRARGEADARSHRL) is disordered. Residues 75–88 (TRARGEADARSHRL) are compositionally biased toward basic and acidic residues.

It belongs to the UPF0161 family.

It localises to the cell inner membrane. In terms of biological role, could be involved in insertion of integral membrane proteins into the membrane. The protein is Putative membrane protein insertion efficiency factor of Burkholderia orbicola (strain MC0-3).